The sequence spans 376 residues: N-acetyldiaminopimelate deacetylase (376 aa).

Residue D69 is part of the active site. E128 acts as the Proton acceptor in catalysis.

The protein belongs to the peptidase M20A family. N-acetyldiaminopimelate deacetylase subfamily.

It carries out the reaction N-acetyl-(2S,6S)-2,6-diaminopimelate + H2O = (2S,6S)-2,6-diaminopimelate + acetate. The protein operates within amino-acid biosynthesis; L-lysine biosynthesis via DAP pathway; LL-2,6-diaminopimelate from (S)-tetrahydrodipicolinate (acetylase route): step 3/3. In terms of biological role, catalyzes the conversion of N-acetyl-diaminopimelate to diaminopimelate and acetate. The protein is N-acetyldiaminopimelate deacetylase of Bacillus thuringiensis subsp. konkukian (strain 97-27).